Consider the following 357-residue polypeptide: Glucose 1-dehydrogenase (357 aa).

Residue Asp-38 coordinates Zn(2+). Positions 40 and 49 each coordinate substrate. His-63 and Glu-64 together coordinate Zn(2+). 2 residues coordinate substrate: Glu-114 and Glu-150. Residue Glu-150 participates in Zn(2+) binding. NADP(+) is bound by residues 181–184, 207–208, Ser-228, 272–274, and 301–303; these read NGSL, RR, LGV, and SVN. Substrate is bound at residue Asn-303.

The protein belongs to the zinc-containing alcohol dehydrogenase family. Glucose 1-dehydrogenase subfamily. Homodimer. It depends on Zn(2+) as a cofactor.

It catalyses the reaction D-glucose + NAD(+) = D-glucono-1,5-lactone + NADH + H(+). It carries out the reaction D-glucose + NADP(+) = D-glucono-1,5-lactone + NADPH + H(+). With respect to regulation, activated by molar concentrations of KCl or NaCl. Inhibited by EDTA in vitro. Catalyzes the NAD(P)(+)-dependent oxidation of D-glucose to D-gluconate. Displays broad substrate specificity since it is able to catalyze the oxidation of a number of alternative aldose sugars, such as D-xylose, D-galactose, and D-fucose, to the corresponding glyconate. Can utilize both NAD(+) and NADP(+) as electron acceptor, with a preference for NADP(+). Physiologically, seems to be involved in the degradation of glucose through a modified Entner-Doudoroff pathway. This Haloferax mediterranei (strain ATCC 33500 / DSM 1411 / JCM 8866 / NBRC 14739 / NCIMB 2177 / R-4) (Halobacterium mediterranei) protein is Glucose 1-dehydrogenase.